A 209-amino-acid polypeptide reads, in one-letter code: Ribonuclease HII (209 aa).

One can recognise an RNase H type-2 domain in the interval 19-208 (GLVAGVDEAG…VARALQAPVA (190 aa)). Positions 25, 26, and 117 each coordinate a divalent metal cation.

It belongs to the RNase HII family. Requires Mn(2+) as cofactor. Mg(2+) is required as a cofactor.

The protein localises to the cytoplasm. It catalyses the reaction Endonucleolytic cleavage to 5'-phosphomonoester.. Endonuclease that specifically degrades the RNA of RNA-DNA hybrids. This chain is Ribonuclease HII, found in Acidovorax ebreus (strain TPSY) (Diaphorobacter sp. (strain TPSY)).